Consider the following 968-residue polypeptide: Dynein axonemal intermediate chain 3 (968 aa).

The span at 1 to 33 (MKDTSSKRPKSKEANKKKTKDKSNADNLPKPEE) shows a compositional bias: basic and acidic residues. 2 disordered regions span residues 1 to 39 (MKDT…ASEP) and 136 to 166 (KPPA…PEPQ). The span at 141–157 (GADEQMEDEEQQEEEEE) shows a compositional bias: acidic residues. 3 WD repeats span residues 407–447 (ECPD…DRLQ), 480–536 (GHKA…VMVH), and 712–753 (VYSK…RQPS). Positions 830–857 (LHTHTDQLRVLEERVREAKQNLLAVSDR) form a coiled coil. A compositionally biased stretch (basic and acidic residues) spans 897 to 919 (KRQSDHQKKKKETEAEQQKKKTE). Residues 897 to 930 (KRQSDHQKKKKETEAEQQKKKTELVTPPKQEEEV) are disordered.

Part of the multisubunit axonemal dynein complex formed at least of two heavy chains and a number of intermediate and light chains.

It is found in the cytoplasm. May be involved in the regulation of cilia function. The sequence is that of Dynein axonemal intermediate chain 3 (dnai3) from Danio rerio (Zebrafish).